The chain runs to 95 residues: Stationary phase-expressed protein 1 (95 aa).

Residues 20 to 38 (FRYIMLGLVGAAVVPTAYM) form a helical membrane-spanning segment.

The protein resides in the mitochondrion membrane. This Saccharomyces cerevisiae (strain RM11-1a) (Baker's yeast) protein is Stationary phase-expressed protein 1 (SPG1).